The sequence spans 303 residues: D-alanine--D-alanine ligase (303 aa).

The 197-residue stretch at 102–298 (RILLAAAGLP…YPELCDWMVR (197 aa)) folds into the ATP-grasp domain. Position 128-181 (128-181 (PLPAPYVIKPVAEGSSVGVEIVRTGDNRRAEIARTWRFGKEALVESFIPGRELT)) interacts with ATP. Mg(2+) is bound by residues Asp251, Glu265, and Asn267.

This sequence belongs to the D-alanine--D-alanine ligase family. It depends on Mg(2+) as a cofactor. The cofactor is Mn(2+).

The protein localises to the cytoplasm. The catalysed reaction is 2 D-alanine + ATP = D-alanyl-D-alanine + ADP + phosphate + H(+). The protein operates within cell wall biogenesis; peptidoglycan biosynthesis. Functionally, cell wall formation. The polypeptide is D-alanine--D-alanine ligase (Gluconobacter oxydans (strain 621H) (Gluconobacter suboxydans)).